The following is a 258-amino-acid chain: tRNA pseudouridine synthase A (258 aa).

The Nucleophile role is filled by D52. Y110 contributes to the substrate binding site.

Belongs to the tRNA pseudouridine synthase TruA family. In terms of assembly, homodimer.

The enzyme catalyses uridine(38/39/40) in tRNA = pseudouridine(38/39/40) in tRNA. In terms of biological role, formation of pseudouridine at positions 38, 39 and 40 in the anticodon stem and loop of transfer RNAs. The polypeptide is tRNA pseudouridine synthase A (Francisella philomiragia subsp. philomiragia (strain ATCC 25017 / CCUG 19701 / FSC 153 / O#319-036)).